The following is a 1111-amino-acid chain: Probable arabinosyltransferase A (1111 aa).

13 consecutive transmembrane segments (helical) span residues 12-34 (IIRL…VPLL), 205-224 (IAVG…LSAL), 333-355 (VWMR…HWVL), 370-387 (VAVL…LPFN), 394-413 (PLIA…AIAL), 423-445 (AVVA…ALLT), 462-484 (GLLA…VFHS), 530-547 (FPVL…VVLL), 554-576 (GLAS…LLTF), 581-603 (WAIQ…AFAF), 615-637 (TVYI…GWFG), 652-674 (IAGH…LAGG), and 695-717 (FLAT…GSLA). Positions 804–831 (GLVNSDASPNKPNVTFSDSAGTAGGKGP) are disordered. The segment covering 808 to 823 (SDASPNKPNVTFSDSA) has biased composition (polar residues).

Belongs to the emb family.

It is found in the cell membrane. Functionally, arabinosyl transferase responsible for the polymerization of arabinose into the arabinan of arabinogalactan. The sequence is that of Probable arabinosyltransferase A (embA) from Mycobacterium leprae (strain TN).